Reading from the N-terminus, the 297-residue chain is Homoserine kinase (297 aa).

ATP is bound at residue Pro79 to Ala89.

Belongs to the GHMP kinase family. Homoserine kinase subfamily.

Its subcellular location is the cytoplasm. It catalyses the reaction L-homoserine + ATP = O-phospho-L-homoserine + ADP + H(+). It participates in amino-acid biosynthesis; L-threonine biosynthesis; L-threonine from L-aspartate: step 4/5. Functionally, catalyzes the ATP-dependent phosphorylation of L-homoserine to L-homoserine phosphate. The polypeptide is Homoserine kinase (Pyrobaculum neutrophilum (strain DSM 2338 / JCM 9278 / NBRC 100436 / V24Sta) (Thermoproteus neutrophilus)).